We begin with the raw amino-acid sequence, 207 residues long: Putative early 22.7 kDa protein (207 aa).

Functionally, this protein is required for viral late gene expression. This Orgyia pseudotsugata (Douglas-fir tussock moth) protein is Putative early 22.7 kDa protein (DA18).